Here is a 64-residue protein sequence, read N- to C-terminus: Potassium channel toxin kappa-KTx 3.4 (64 aa).

The signal sequence occupies residues 1–26 (MKSTLMTASLLILVLLSIIDYASVYA). The propeptide occupies 27 to 36 (EFIDSEISLE). Disulfide bonds link Cys-43–Cys-61 and Cys-47–Cys-57.

It belongs to the short scorpion toxin superfamily. Potassium channel inhibitor kappa-KTx family. Kappa-KTx 3 subfamily. As to expression, expressed by the venom gland.

Its subcellular location is the secreted. Potassium channel inhibitor (Kv). The sequence is that of Potassium channel toxin kappa-KTx 3.4 from Heterometrus petersii (Asian forest scorpion).